The primary structure comprises 397 residues: MIIAPKVRGFICTTTHPAGCEANVRQQIAYVKSKGPLANGPKRVLVIGASTGYGLASRITAAFGSDAATIGVFLEKAGTEKKPGSAGWYNSAAFDKAAKEAGLYSKSVNGDAFSDECRAKVVELIKADLGQVDMVVYSLASPVRKLPATGELIRSALKPIGEVYTATAVDTNKDELIEAHVEPANEEEIANTIKVMGGEDWELWLQALDQAGVLAEGVKTVAYSYIGTDITWPIYWHGTLGRAKEDLDRASSAIRQQLSSKNGTANVAVLKSVVTQASAAIPVMPLYIAMSFKLMKEQGIHEGCIEQIQRMFYTRLFDGEFVTDDAQRIRMDDWELRESVQQACRDLWPQVTTENLSQLTDYQGYKAEFLKLFGFGWEGVDYTADVNPEVNFDVVAM.

NAD(+)-binding positions include 48–53, 74–75, 111–112, and 139–140; these read GASTGY, LE, DA, and LA. Tyr225 is a binding site for substrate. The active-site Proton donor is the Tyr235. Residues Lys244 and 273–275 contribute to the NAD(+) site; that span reads VVT.

Belongs to the TER reductase family. In terms of assembly, monomer.

The catalysed reaction is a 2,3-saturated acyl-[ACP] + NAD(+) = a (2E)-enoyl-[ACP] + NADH + H(+). The protein operates within lipid metabolism; fatty acid biosynthesis. Its function is as follows. Involved in the final reduction of the elongation cycle of fatty acid synthesis (FAS II). Catalyzes the reduction of a carbon-carbon double bond in an enoyl moiety that is covalently linked to an acyl carrier protein (ACP). In Tolumonas auensis (strain DSM 9187 / NBRC 110442 / TA 4), this protein is Enoyl-[acyl-carrier-protein] reductase [NADH].